Reading from the N-terminus, the 385-residue chain is Podocin (385 aa).

Residues 1-27 are compositionally biased toward basic and acidic residues; that stretch reads MDSRARSSSREAHGRSSRSSSRDDKKA. Residues 1 to 64 form a disordered region; sequence MDSRARSSSR…GEPRAPAATA (64 aa). The Cytoplasmic segment spans residues 1–104; the sequence is MDSRARSSSR…IKPSGLGACE (104 aa). Cys103 carries S-palmitoyl cysteine lipidation. Residues 105-125 form a helical membrane-spanning segment; that stretch reads WLLVLASLIFIIMTFPFSIWF. At 126–385 the chain is on the extracellular side; sequence CIKVVQEYER…NPKKKDSPML (260 aa). The segment covering 357 to 370 has biased composition (polar residues); it reads NRAQGSINYPSSSK. Positions 357–385 are disordered; that stretch reads NRAQGSINYPSSSKPVEPLNPKKKDSPML. Basic and acidic residues predominate over residues 376–385; it reads NPKKKDSPML.

This sequence belongs to the band 7/mec-2 family. In terms of assembly, interacts with nephrin/NPHS1, KIRRL1 and CD2AP. Interacts with DDN.

The protein localises to the membrane. In terms of biological role, plays a role in the regulation of glomerular permeability, acting probably as a linker between the plasma membrane and the cytoskeleton. The protein is Podocin (Nphs2) of Mus musculus (Mouse).